The following is a 418-amino-acid chain: MIFDKDNFKEFDQELWQAIHDEEIRQQNNIELIASENVVSKAVMAAQGSVLTNKYAEGYPSHRYYGGTDCVDVVESLAIERAKTLFNAEFANVQPHSGSQANAAAYMALIEPGDTVLGMDLAAGGHLTHGASVSFSGKTYHFVSYSVDPKTEMLDYDNILKIAQETQPKLIVAGASAYSRIIDFEKFRQIADAVDAYLMVDMAHIAGLVASGHHPSPIPYAHVTTTTTHKTLRGPRGGLILTNDEAIAKKINSAVFPGLQGGPLEHVIAAKAVALKEALDPSFKIYGEDIIKNAQAMAKVFKEDDDFHLISDGTDNHLFLVDVTKVIENGKKAQNVLEEVNITLNKNSIPFERLSPFKTSGIRIGTPAITSRGMGVEESRRIAELMIKALKNHENQDVLTEVRQEIKSLTDAFPLYEN.

(6S)-5,6,7,8-tetrahydrofolate contacts are provided by residues Leu-121 and 125 to 127; that span reads GHL. At Lys-230 the chain carries N6-(pyridoxal phosphate)lysine. Residue 355-357 coordinates (6S)-5,6,7,8-tetrahydrofolate; it reads SPF.

The protein belongs to the SHMT family. As to quaternary structure, homodimer. The cofactor is pyridoxal 5'-phosphate.

It localises to the cytoplasm. It catalyses the reaction (6R)-5,10-methylene-5,6,7,8-tetrahydrofolate + glycine + H2O = (6S)-5,6,7,8-tetrahydrofolate + L-serine. Its pathway is one-carbon metabolism; tetrahydrofolate interconversion. The protein operates within amino-acid biosynthesis; glycine biosynthesis; glycine from L-serine: step 1/1. Catalyzes the reversible interconversion of serine and glycine with tetrahydrofolate (THF) serving as the one-carbon carrier. This reaction serves as the major source of one-carbon groups required for the biosynthesis of purines, thymidylate, methionine, and other important biomolecules. Also exhibits THF-independent aldolase activity toward beta-hydroxyamino acids, producing glycine and aldehydes, via a retro-aldol mechanism. The protein is Serine hydroxymethyltransferase of Streptococcus agalactiae serotype V (strain ATCC BAA-611 / 2603 V/R).